We begin with the raw amino-acid sequence, 318 residues long: MYLINLLAMIVPVLLAVAFLTLLERKVLGYMQLRKGPNIVGPYGLLQPIADAVKLFTKEPLQPLTSSPMLFIIAPTLALTLALTMWTPLPMPYPLMNMNLSMLFILALSSLAVYTIMWSGWASNSKYALIGALRAVAQTISYEVTLAIIILSLLLMNGSFTLLSMTTTQEYIWLLIPSWPLAMMWFISTLAETNRAPFDLTEGESELVSGFNVEYAGGPFALFFLAEYANIIMMNALTIILFLGAYHNSMVPELYTINFTIKTLLFTAFFLWIRASYPRFRYDQLMHLLWKNFLPLTLVMCMWHVALPIMLAGIPPQT.

8 helical membrane passes run 3–23 (LINL…LTLL), 69–89 (MLFI…WTPL), 102–122 (MLFI…SGWA), 144–164 (VTLA…TLLS), 171–191 (YIWL…STLA), 222–242 (LFFL…IILF), 253–273 (ELYT…FLWI), and 294–314 (LPLT…LAGI).

It belongs to the complex I subunit 1 family. Core subunit of respiratory chain NADH dehydrogenase (Complex I) which is composed of 45 different subunits.

The protein resides in the mitochondrion inner membrane. It carries out the reaction a ubiquinone + NADH + 5 H(+)(in) = a ubiquinol + NAD(+) + 4 H(+)(out). In terms of biological role, core subunit of the mitochondrial membrane respiratory chain NADH dehydrogenase (Complex I) which catalyzes electron transfer from NADH through the respiratory chain, using ubiquinone as an electron acceptor. Essential for the catalytic activity and assembly of complex I. The polypeptide is NADH-ubiquinone oxidoreductase chain 1 (MT-ND1) (Murina suilla (Brown tube-nosed bat)).